A 386-amino-acid chain; its full sequence is S-adenosylmethionine synthase (386 aa).

H16 contributes to the ATP binding site. Residue D18 participates in Mg(2+) binding. E44 contributes to the K(+) binding site. Positions 57 and 100 each coordinate L-methionine. The segment at Q100–R110 is flexible loop. Residues D165–K167, D240, R246–K247, A263, and K267 contribute to the ATP site. An L-methionine-binding site is contributed by D240. K271 lines the L-methionine pocket.

The protein belongs to the AdoMet synthase family. As to quaternary structure, homotetramer; dimer of dimers. The cofactor is Mg(2+). K(+) is required as a cofactor.

It localises to the cytoplasm. It carries out the reaction L-methionine + ATP + H2O = S-adenosyl-L-methionine + phosphate + diphosphate. It participates in amino-acid biosynthesis; S-adenosyl-L-methionine biosynthesis; S-adenosyl-L-methionine from L-methionine: step 1/1. Catalyzes the formation of S-adenosylmethionine (AdoMet) from methionine and ATP. The overall synthetic reaction is composed of two sequential steps, AdoMet formation and the subsequent tripolyphosphate hydrolysis which occurs prior to release of AdoMet from the enzyme. This Francisella philomiragia subsp. philomiragia (strain ATCC 25017 / CCUG 19701 / FSC 153 / O#319-036) protein is S-adenosylmethionine synthase.